A 367-amino-acid polypeptide reads, in one-letter code: Glycolate oxidase 1 (367 aa).

N-acetylmethionine is present on methionine 1. Tyrosine 24 is a binding site for glyoxylate. FMN is bound by residues 77-79, serine 106, 127-129, and threonine 155; these read PTA and QLY. Tyrosine 129 provides a ligand contact to glyoxylate. Arginine 164 is a glyoxylate binding site. Residues lysine 230 and serine 252 each contribute to the FMN site. Residues histidine 254 and arginine 257 each coordinate glyoxylate. Histidine 254 serves as the catalytic Proton acceptor. FMN-binding positions include 285–289 and 308–309; these read DGGVR and GR.

Belongs to the FMN-dependent alpha-hydroxy acid dehydrogenase family. In terms of assembly, homotetramer. Requires FMN as cofactor.

It is found in the peroxisome. The catalysed reaction is glycolate + O2 = glyoxylate + H2O2. It functions in the pathway photosynthesis; photorespiration; glycine from 2-phosphoglycolate: step 2/3. Functionally, catalyzes the oxidation of glycolate to glyoxylate, with a reduction of O2 to H2O2. Is a key enzyme in photorespiration in green plants. This Arabidopsis thaliana (Mouse-ear cress) protein is Glycolate oxidase 1 (GLO1).